Consider the following 489-residue polypeptide: uncharacterized protein (489 aa).

Threonine 26 carries the post-translational modification Phosphothreonine. Serine 27 bears the Phosphoserine mark. A run of 3 helical transmembrane segments spans residues 63–83 (IVYL…IEFA), 182–202 (LVWS…ILCA), and 221–241 (VFKL…IAFL). Disordered regions lie at residues 260–312 (PKTS…APLE), 401–435 (STLL…VPPS), and 450–489 (PSIN…PVVH). Serine 263 carries the post-translational modification Phosphoserine. Residues 268-282 (QRGTSSSQPSENDAN) are compositionally biased toward polar residues. The segment covering 450–465 (PSINNVGGSTAPSVNN) has biased composition (polar residues). The segment covering 477–489 (SRSSTLTERPVVH) has biased composition (low complexity).

The protein localises to the endoplasmic reticulum membrane. This is an uncharacterized protein from Schizosaccharomyces pombe (strain 972 / ATCC 24843) (Fission yeast).